The following is a 377-amino-acid chain: Adaptive-response sensory kinase SasA (377 aa).

Residues 154–373 (MLVHDLRSPL…SFHFTLPVYR (220 aa)) enclose the Histidine kinase domain. His-157 is modified (phosphohistidine; by autocatalysis).

Homooligomerizes. Interacts with KaiC. Participates in the KaiABC clock complex, whose core is composed of a KaiC homohexamer, 6 KaiB and up to 6 KaiA dimers. SasA and KaiB(fs) compete to bind to KaiC.

The enzyme catalyses ATP + protein L-histidine = ADP + protein N-phospho-L-histidine.. In terms of biological role, member of the two-component regulatory system SasA/RpaA involved in genome-wide circadian gene expression. One of several clock output pathways. Participates in the Kai clock protein complex, the main circadian regulator in cyanobacteria, via its interaction with KaiC. KaiC enhances the autophosphorylation activity of SasA, which then transfers its phosphate group to RpaA to activate it. In addition to its output function, recruits fold-shifted KaiB (KaiB(fs)) to KaiC to cooperatively form the KaiB(6):KaiC(6) complex (independent of SasA kinase activity). Required for robustness of the circadian rhythm of gene expression and is involved in clock output, also required for adaptation to light/dark cycles. In Synechococcus sp. (strain JA-2-3B'a(2-13)) (Cyanobacteria bacterium Yellowstone B-Prime), this protein is Adaptive-response sensory kinase SasA.